The sequence spans 145 residues: Mini-ribonuclease 3 (145 aa).

The active site involves Asp-27.

This sequence belongs to the MrnC RNase family. Homodimer. Mg(2+) is required as a cofactor.

It localises to the cytoplasm. Its function is as follows. Involved in correct processing of both the 5' and 3' ends of 23S rRNA precursor. Processes 30S rRNA precursor transcript even in absence of ribonuclease 3 (Rnc); Rnc processes 30S rRNA into smaller rRNA precursors. In Kosmotoga olearia (strain ATCC BAA-1733 / DSM 21960 / TBF 19.5.1), this protein is Mini-ribonuclease 3.